Reading from the N-terminus, the 287-residue chain is uncharacterized protein (287 aa).

Active-site charge relay system residues include Thr-43 and Tyr-104. The active-site Proton donor is Tyr-130. Lys-158 serves as the catalytic Schiff-base intermediate with substrate.

Belongs to the DapA family. Homotetramer.

Its subcellular location is the cytoplasm. This is an uncharacterized protein from Pyrococcus horikoshii (strain ATCC 700860 / DSM 12428 / JCM 9974 / NBRC 100139 / OT-3).